Reading from the N-terminus, the 252-residue chain is Chitooligosaccharide deacetylase (252 aa).

The Mg(2+) site is built by His-61 and His-125.

The protein belongs to the YdjC deacetylase family. ChbG subfamily. Homodimer. Mg(2+) is required as a cofactor.

It is found in the cytoplasm. The catalysed reaction is N,N'-diacetylchitobiose + H2O = N-acetyl-beta-D-glucosaminyl-(1-&gt;4)-D-glucosamine + acetate. It carries out the reaction diacetylchitobiose-6'-phosphate + H2O = N'-monoacetylchitobiose-6'-phosphate + acetate. The protein operates within glycan degradation; chitin degradation. Its function is as follows. Involved in the degradation of chitin. ChbG is essential for growth on the acetylated chitooligosaccharides chitobiose and chitotriose but is dispensable for growth on cellobiose and chitosan dimer, the deacetylated form of chitobiose. Deacetylation of chitobiose-6-P and chitotriose-6-P is necessary for both the activation of the chb promoter by the regulatory protein ChbR and the hydrolysis of phosphorylated beta-glucosides by the phospho-beta-glucosidase ChbF. Catalyzes the removal of only one acetyl group from chitobiose-6-P to yield monoacetylchitobiose-6-P, the inducer of ChbR and the substrate of ChbF. The protein is Chitooligosaccharide deacetylase of Salmonella enteritidis PT4 (strain P125109).